A 451-amino-acid polypeptide reads, in one-letter code: Chromosomal replication initiator protein DnaA (451 aa).

The tract at residues 1-101 is domain I, interacts with DnaA modulators; sequence MTENETIFWN…TSNHIFSRQT (101 aa). The segment at 101 to 110 is domain II; sequence TINSLPAITS. A domain III, AAA+ region region spans residues 111–329; that stretch reads DLNPKYSFDN…GALKDISLVA (219 aa). Residues Gly-155, Gly-157, Lys-158, and Thr-159 each coordinate ATP. Positions 330–451 are domain IV, binds dsDNA; the sequence is NFKEIDKITV…EIETIKNKIK (122 aa).

This sequence belongs to the DnaA family. Oligomerizes as a right-handed, spiral filament on DNA at oriC.

The protein localises to the cytoplasm. In terms of biological role, plays an essential role in the initiation and regulation of chromosomal replication. ATP-DnaA binds to the origin of replication (oriC) to initiate formation of the DNA replication initiation complex once per cell cycle. Binds the DnaA box (a 9 base pair repeat at the origin) and separates the double-stranded (ds)DNA. Forms a right-handed helical filament on oriC DNA; dsDNA binds to the exterior of the filament while single-stranded (ss)DNA is stabiized in the filament's interior. The ATP-DnaA-oriC complex binds and stabilizes one strand of the AT-rich DNA unwinding element (DUE), permitting loading of DNA polymerase. After initiation quickly degrades to an ADP-DnaA complex that is not apt for DNA replication. Binds acidic phospholipids. The chain is Chromosomal replication initiator protein DnaA from Streptococcus uberis (strain ATCC BAA-854 / 0140J).